We begin with the raw amino-acid sequence, 478 residues long: RNA pseudouridine synthase 3, mitochondrial (478 aa).

The transit peptide at 1-20 directs the protein to the mitochondrion; that stretch reads MWKAKTCFRQIYLTVLIRRY. Residues 92-162 enclose the S4 RNA-binding domain; it reads EEIYDKAIQT…MRISKRYDTI (71 aa). The active site involves aspartate 232.

This sequence belongs to the pseudouridine synthase RluA family.

The protein resides in the mitochondrion. The enzyme catalyses a uridine in RNA = a pseudouridine in RNA. In Arabidopsis thaliana (Mouse-ear cress), this protein is RNA pseudouridine synthase 3, mitochondrial.